A 598-amino-acid chain; its full sequence is NADH-quinone oxidoreductase subunit C/D (598 aa).

The NADH dehydrogenase I subunit C stretch occupies residues 1-190 (MSIFTQEVSA…EAFSLDDERL (190 aa)). Positions 214–598 (DYLFLNLGPN…IDFVMADVDR (385 aa)) are NADH dehydrogenase I subunit D.

This sequence in the N-terminal section; belongs to the complex I 30 kDa subunit family. The protein in the C-terminal section; belongs to the complex I 49 kDa subunit family. In terms of assembly, NDH-1 is composed of 13 different subunits. Subunits NuoB, CD, E, F, and G constitute the peripheral sector of the complex.

The protein localises to the cell inner membrane. It catalyses the reaction a quinone + NADH + 5 H(+)(in) = a quinol + NAD(+) + 4 H(+)(out). Its function is as follows. NDH-1 shuttles electrons from NADH, via FMN and iron-sulfur (Fe-S) centers, to quinones in the respiratory chain. The immediate electron acceptor for the enzyme in this species is believed to be ubiquinone. Couples the redox reaction to proton translocation (for every two electrons transferred, four hydrogen ions are translocated across the cytoplasmic membrane), and thus conserves the redox energy in a proton gradient. This Shewanella woodyi (strain ATCC 51908 / MS32) protein is NADH-quinone oxidoreductase subunit C/D.